Here is a 446-residue protein sequence, read N- to C-terminus: tRNA modification GTPase MnmE (446 aa).

Positions 21, 77, and 116 each coordinate (6S)-5-formyl-5,6,7,8-tetrahydrofolate. One can recognise a TrmE-type G domain in the interval 212 to 370; that stretch reads GFRIALIGAP…LRAALASHVA (159 aa). N222 is a binding site for K(+). GTP is bound by residues 222–227, 241–247, and 266–269; these read NAGKST, TDVAGTT, and DTAG. S226 is a binding site for Mg(2+). Positions 241, 243, and 246 each coordinate K(+). Position 247 (T247) interacts with Mg(2+). A (6S)-5-formyl-5,6,7,8-tetrahydrofolate-binding site is contributed by K446.

The protein belongs to the TRAFAC class TrmE-Era-EngA-EngB-Septin-like GTPase superfamily. TrmE GTPase family. In terms of assembly, homodimer. Heterotetramer of two MnmE and two MnmG subunits. K(+) is required as a cofactor.

It is found in the cytoplasm. Functionally, exhibits a very high intrinsic GTPase hydrolysis rate. Involved in the addition of a carboxymethylaminomethyl (cmnm) group at the wobble position (U34) of certain tRNAs, forming tRNA-cmnm(5)s(2)U34. In Caulobacter vibrioides (strain ATCC 19089 / CIP 103742 / CB 15) (Caulobacter crescentus), this protein is tRNA modification GTPase MnmE.